A 327-amino-acid polypeptide reads, in one-letter code: Probable NAD(P)H-dependent D-xylose reductase xyl1 (327 aa).

Catalysis depends on Tyr57, which acts as the Proton donor. His119 is a binding site for substrate. NAD(+)-binding positions include 173 to 174, 222 to 231, and 278 to 288; these read SN, SSLGPQSFIE, and KSNNPDRLAQN.

Belongs to the aldo/keto reductase family.

The catalysed reaction is xylitol + NAD(+) = D-xylose + NADH + H(+). It carries out the reaction xylitol + NADP(+) = D-xylose + NADPH + H(+). The protein operates within carbohydrate metabolism; D-xylose degradation. Catalyzes the initial reaction in the xylose utilization pathway by reducing D-xylose into xylitol. Xylose is a major component of hemicelluloses such as xylan. Most fungi utilize D-xylose via three enzymatic reactions, xylose reductase (XR), xylitol dehydrogenase (XDH), and xylulokinase, to form xylulose 5-phosphate, which enters pentose phosphate pathway. The chain is Probable NAD(P)H-dependent D-xylose reductase xyl1 (xyl1) from Arthroderma otae (strain ATCC MYA-4605 / CBS 113480) (Microsporum canis).